The following is a 180-amino-acid chain: MSEYASSIHSQMKQFDTKYSGNRILQQLENKTNLPKSYLVAGLGFAYLLLIFINVGGVGEILSNFAGFVLPAYLSLVALKTPTSTDDTQLLTYWIVFSFLSVIEFWSKAILYLIPFYWFLKTVFLIYIALPQTGGARMIYQKIVAPLTDRYILRDVSKTEKDEIRASVNEASKATGASVH.

Residue S2 is modified to N-acetylserine. Residues 2–17 (SEYASSIHSQMKQFDT) are interaction with YIP1. Over 2–35 (SEYASSIHSQMKQFDTKYSGNRILQQLENKTNLP) the chain is Cytoplasmic. A helical membrane pass occupies residues 36-55 (KSYLVAGLGFAYLLLIFINV). Residues 56-57 (GG) are Lumenal-facing. A helical membrane pass occupies residues 58 to 78 (VGEILSNFAGFVLPAYLSLVA). The Cytoplasmic portion of the chain corresponds to 79–88 (LKTPTSTDDT). Residues 89-105 (QLLTYWIVFSFLSVIEF) form a helical membrane-spanning segment. Over 106 to 108 (WSK) the chain is Lumenal. Residues 109-127 (AILYLIPFYWFLKTVFLIY) traverse the membrane as a helical segment. Over 128–180 (IALPQTGGARMIYQKIVAPLTDRYILRDVSKTEKDEIRASVNEASKATGASVH) the chain is Cytoplasmic.

The protein belongs to the DP1 family. As to quaternary structure, oligomer. Interacts with YIP1.

The protein localises to the endoplasmic reticulum membrane. It localises to the golgi apparatus membrane. In terms of biological role, required to generate and maintain the structure of the tubular endoplasmic reticulum network and the vacuole. Induces high curvature in membranes and causes membrane tubule formation. Involved in membrane/vesicle trafficking. The chain is Protein YOP1 (YOP1) from Saccharomyces cerevisiae (strain ATCC 204508 / S288c) (Baker's yeast).